The chain runs to 125 residues: Phosphoribosyl-AMP cyclohydrolase (125 aa).

Asp-91 contributes to the Mg(2+) binding site. Cys-92 lines the Zn(2+) pocket. 2 residues coordinate Mg(2+): Asp-93 and Asp-95. Cys-108 and Cys-115 together coordinate Zn(2+).

Belongs to the PRA-CH family. In terms of assembly, homodimer. Requires Mg(2+) as cofactor. It depends on Zn(2+) as a cofactor.

The protein resides in the cytoplasm. The catalysed reaction is 1-(5-phospho-beta-D-ribosyl)-5'-AMP + H2O = 1-(5-phospho-beta-D-ribosyl)-5-[(5-phospho-beta-D-ribosylamino)methylideneamino]imidazole-4-carboxamide. Its pathway is amino-acid biosynthesis; L-histidine biosynthesis; L-histidine from 5-phospho-alpha-D-ribose 1-diphosphate: step 3/9. In terms of biological role, catalyzes the hydrolysis of the adenine ring of phosphoribosyl-AMP. This chain is Phosphoribosyl-AMP cyclohydrolase, found in Streptomyces griseus subsp. griseus (strain JCM 4626 / CBS 651.72 / NBRC 13350 / KCC S-0626 / ISP 5235).